Here is an 805-residue protein sequence, read N- to C-terminus: MGSEQALSEVVESAKERFGRLRHLVQKFLDDDDVPQECLPLLQECAEIWSSYVDACQDITMQAPKEDANRLSKGFLRLNETAFLYYMIVYTLLEDTLPRLKEFSSNKDQNVRNLYGERIQLLHNDPNIERIRNVIENYPKFIQLQTIEPGKLSSMLHFHGDALLLIDVRPRSEFVRAHIKCKNIICIDPASFKDSFTDQQIESVSLITSPHSDITFFSNRDKFKFIILYTDTQLHNNFQQRQTRILAKILSQNSVIKPLSGTKILILENGFSNWVKLGGAYQSSVSETAHLTSSSSTPAFGSPQVPTGLFNQKSLSPNKDKSMPMVSMNTQPLLTTVQRPQLPLYYSDLPIIPQPSPNRNSPTVQKFSPHPPTTLSKLNTPSTIQNKANTVERISPDIRAAQAHAYLPPASNVFSPRIPPLPQQNLSSSRQTILNNSQVLDLDLIVGLENIGNCCYMNCILQCLVGTHDLVRMFLDNTYLNFINFDSSRGSKGLLAKNFAILVNNMHRHGAFTPPNVRTIPVQTIQFKKICGHINPMYSDSMQQDCQEFCQFLLDGLHEDLNQNGSKKHLKQLSDEEERMREKMSIRKASALEWERFLLTDFSAIIDLFQGQYASRLQCQVCEHTSTTYQTFSVLSVPVPRVKTCNILDCFREFTKCERLGVDEQWSCPKCLKKQPSTKQLKITRLPKKLIINLKRFDNQMNKNNVFVQYPYSLDLTPYWARDFNHEAIVNEDIPTRGQVPPFRYRLYGVACHSGSLYGGHYTSYVYKGPKKGWYFFDDSLYRPITFSTEFITPSAYVLFYERIF.

In terms of domain architecture, Rhodanese spans 159 to 283 (HGDALLLIDV…WVKLGGAYQS (125 aa)). Residues 359-380 (RNSPTVQKFSPHPPTTLSKLNT) form a disordered region. Positions 446 to 804 (VGLENIGNCC…SAYVLFYERI (359 aa)) constitute a USP domain. C455 acts as the Nucleophile in catalysis. Residue H761 is the Proton acceptor of the active site.

Belongs to the peptidase C19 family.

It carries out the reaction Thiol-dependent hydrolysis of ester, thioester, amide, peptide and isopeptide bonds formed by the C-terminal Gly of ubiquitin (a 76-residue protein attached to proteins as an intracellular targeting signal).. The protein is Ubiquitin carboxyl-terminal hydrolase 5 (UBP5) of Saccharomyces cerevisiae (strain ATCC 204508 / S288c) (Baker's yeast).